A 475-amino-acid polypeptide reads, in one-letter code: Ataxin-10 (475 aa).

R10 carries the post-translational modification Omega-N-methylarginine. Phosphoserine is present on residues S12 and S77. T82 carries the post-translational modification Phosphothreonine. At S430 the chain carries Phosphoserine.

The protein belongs to the ataxin-10 family. As to quaternary structure, homooligomer. Interacts with GNB2. Interacts with IQCB1. Interacts with OGT. Interacts with PLK1. In terms of processing, polyubiquitinated. Post-translationally, phosphorylation at Ser-12 by AURKB promotes the association of ATXN10 with PLK1. Phosphorylation at Ser-77 and Thr-82 by PLK1 may play a role in the regulation of cytokinesis and may stimulate the proteasome-mediated degradation of ATXN10. In high cell density areas; cerebellar cortex, dentate gyrus, hippocampus, anterior olfactory nucleus, primary olfactory cortex.

The protein localises to the cytoplasm. The protein resides in the perinuclear region. It localises to the midbody. Its subcellular location is the cytoskeleton. It is found in the cilium basal body. The protein localises to the microtubule organizing center. The protein resides in the centrosome. It localises to the centriole. May play a role in the regulation of cytokinesis. May play a role in signaling by stimulating protein glycosylation. Induces neuritogenesis by activating the Ras-MAP kinase pathway and is necessary for the survival of cerebellar neurons. Does not appear to play a major role in ciliogenesis. This Mus musculus (Mouse) protein is Ataxin-10 (Atxn10).